The following is a 145-amino-acid chain: D-aminoacyl-tRNA deacylase (145 aa).

The short motif at 137 to 138 is the Gly-cisPro motif, important for rejection of L-amino acids element; the sequence is GP.

Belongs to the DTD family. As to quaternary structure, homodimer.

Its subcellular location is the cytoplasm. The enzyme catalyses glycyl-tRNA(Ala) + H2O = tRNA(Ala) + glycine + H(+). It carries out the reaction a D-aminoacyl-tRNA + H2O = a tRNA + a D-alpha-amino acid + H(+). An aminoacyl-tRNA editing enzyme that deacylates mischarged D-aminoacyl-tRNAs. Also deacylates mischarged glycyl-tRNA(Ala), protecting cells against glycine mischarging by AlaRS. Acts via tRNA-based rather than protein-based catalysis; rejects L-amino acids rather than detecting D-amino acids in the active site. By recycling D-aminoacyl-tRNA to D-amino acids and free tRNA molecules, this enzyme counteracts the toxicity associated with the formation of D-aminoacyl-tRNA entities in vivo and helps enforce protein L-homochirality. In Deinococcus radiodurans (strain ATCC 13939 / DSM 20539 / JCM 16871 / CCUG 27074 / LMG 4051 / NBRC 15346 / NCIMB 9279 / VKM B-1422 / R1), this protein is D-aminoacyl-tRNA deacylase.